The chain runs to 205 residues: Holliday junction branch migration complex subunit RuvA (205 aa).

Positions 1 to 64 (MIGRLRGLLV…EDAQLLYGFI (64 aa)) are domain I. The interval 65–143 (TKQERALFRL…SLMEASAGSE (79 aa)) is domain II. Residues 144 to 156 (REFMLKSNYTPAP) are flexible linker. Residues 157 to 205 (VINTAEEDAIAALLSLGYKPAQASKAVSAVYQDGMDSETLIKSSLKSML) form a domain III region.

It belongs to the RuvA family. Homotetramer. Forms an RuvA(8)-RuvB(12)-Holliday junction (HJ) complex. HJ DNA is sandwiched between 2 RuvA tetramers; dsDNA enters through RuvA and exits via RuvB. An RuvB hexamer assembles on each DNA strand where it exits the tetramer. Each RuvB hexamer is contacted by two RuvA subunits (via domain III) on 2 adjacent RuvB subunits; this complex drives branch migration. In the full resolvosome a probable DNA-RuvA(4)-RuvB(12)-RuvC(2) complex forms which resolves the HJ.

Its subcellular location is the cytoplasm. The RuvA-RuvB-RuvC complex processes Holliday junction (HJ) DNA during genetic recombination and DNA repair, while the RuvA-RuvB complex plays an important role in the rescue of blocked DNA replication forks via replication fork reversal (RFR). RuvA specifically binds to HJ cruciform DNA, conferring on it an open structure. The RuvB hexamer acts as an ATP-dependent pump, pulling dsDNA into and through the RuvAB complex. HJ branch migration allows RuvC to scan DNA until it finds its consensus sequence, where it cleaves and resolves the cruciform DNA. The protein is Holliday junction branch migration complex subunit RuvA of Shewanella sediminis (strain HAW-EB3).